Reading from the N-terminus, the 557-residue chain is MLLSRMKPAVGGEASTSSNEKKRKNKSKKIPRLEDYLNQRDYLGALTLLEFQRNSGVSVEHADLWTGFCAFHVGDHKRAMEEYKALTLRPDCPVDVWVYLGCALFFLGLYKEAEEAALKGSKTQLQNRLLFHLAHKFNDEKKLMGFHQNLEDVTEDQLSLASIHYMRSHYQEAIDIYKRILLQNREFLALNVYVALCYYKLDYYDVSQEVLAVYLQSIPDSTIALNLKACNHFRLYNGKAAETELKNLIDISSSSFQFAKELIQHNLVVFRGGEGALQVLPPLIDVISEARLNLVIYYLRQDDIQEAYKLIKDLEPTTPQEYILKGVVNAALGQEIGSRDHLKIAQQFFQLVGGSASECDTIPGRQCMASCFFLLKQFEDVLIYLNSVKSYFYNDDTFSFNYAQAKAALGNYREAEELFLLIQNEKIKSDYVFQSWLARCYIMNQKPRQAWELYLRMETSSDPFSLLQLIANDCYKMGQFYYAAKAFDALERLDPNPEYWEGKRGACVGIFQLILAGRESREILKEVLPMLRSTGNPQVEYIIRIMKKWAKDNRVAL.

Residues 1–30 (MLLSRMKPAVGGEASTSSNEKKRKNKSKKI) form a disordered region. Residues 21–30 (KKRKNKSKKI) are compositionally biased toward basic residues. 4 TPR repeats span residues 60-93 (EHAD…PDCP), 95-128 (DVWV…LQNR), 154-187 (TEDQ…NREF), and 471-504 (ANDC…EGKR).

Belongs to the IFT56 family. In terms of assembly, component of the IFT complex B.

It is found in the cell projection. Its subcellular location is the cilium. Component of the intraflagellar transport (IFT) complex B required for transport of proteins in the motile cilium. Required for transport of specific ciliary cargo proteins related to motility, while it is neither required for IFT complex B assembly or motion nor for cilium assembly. Plays a key role in maintaining the integrity of the IFT complex B and the proper ciliary localization of the IFT complex B components. Essential for maintaining proper microtubule organization within the ciliary axoneme. This is Intraflagellar transport protein 56 from Danio rerio (Zebrafish).